We begin with the raw amino-acid sequence, 236 residues long: 15,16-dihydrobiliverdin:ferredoxin oxidoreductase (236 aa).

This sequence belongs to the HY2 family.

It carries out the reaction 15,16-dihydrobiliverdin + oxidized 2[4Fe-4S]-[ferredoxin] = biliverdin IXalpha + reduced 2[4Fe-4S]-[ferredoxin] + 2 H(+). Functionally, catalyzes the two-electron reduction of biliverdin IX-alpha at the C15 methine bridge. This is 15,16-dihydrobiliverdin:ferredoxin oxidoreductase from Prochlorococcus marinus (strain MIT 9515).